Consider the following 263-residue polypeptide: Malonyl-[acyl-carrier protein] O-methyltransferase (263 aa).

This sequence belongs to the methyltransferase superfamily.

It carries out the reaction malonyl-[ACP] + S-adenosyl-L-methionine = malonyl-[ACP] methyl ester + S-adenosyl-L-homocysteine. It participates in cofactor biosynthesis; biotin biosynthesis. In terms of biological role, converts the free carboxyl group of a malonyl-thioester to its methyl ester by transfer of a methyl group from S-adenosyl-L-methionine (SAM). It allows to synthesize pimeloyl-ACP via the fatty acid synthetic pathway. The chain is Malonyl-[acyl-carrier protein] O-methyltransferase from Chlorobium luteolum (strain DSM 273 / BCRC 81028 / 2530) (Pelodictyon luteolum).